Consider the following 213-residue polypeptide: Uridine kinase (213 aa).

ATP is bound at residue 14 to 21 (GASASGKS).

It belongs to the uridine kinase family.

The protein localises to the cytoplasm. The catalysed reaction is uridine + ATP = UMP + ADP + H(+). It catalyses the reaction cytidine + ATP = CMP + ADP + H(+). It participates in pyrimidine metabolism; CTP biosynthesis via salvage pathway; CTP from cytidine: step 1/3. Its pathway is pyrimidine metabolism; UMP biosynthesis via salvage pathway; UMP from uridine: step 1/1. This Vibrio parahaemolyticus serotype O3:K6 (strain RIMD 2210633) protein is Uridine kinase.